Consider the following 355-residue polypeptide: MDQSFGNLGGGGGAGGSGKAAASSFLQLPLSTAAAATAYYGTPLALHQAAAAAGPSQYHGHGHPHHGGGHHHSKHGGAGGGEISAAEAESIKAKIMAHPQYSALLAAYLDCQKVGAPPEVLERLTATAAKLDARPPGRHDARDPELDQFMEAYCNMLAKYREELTRPIDEAMEFLKRVESQLDTIAGGAHGGGAGSARLLLADGKSECVGSSEDDMDPSGRENEPPEIDPRAEDKELKFQLLKKYSGYLSSLRQEFSKKKKKGKLPKEARQKLLHWWELHYKWPYPSETEKIALAESTGLDQKQINNWFINQRKRHWKPSEDMPFVMMEGFHPQNAAALYMDGPFMADGMYRLGS.

Disordered stretches follow at residues 52-82 and 207-233; these read AAGPSQYHGHGHPHHGGGHHHSKHGGAGGGE and ECVGSSEDDMDPSGRENEPPEIDPRAE. The span at 60 to 75 shows a compositional bias: basic residues; that stretch reads GHGHPHHGGGHHHSKH. A compositionally biased stretch (basic and acidic residues) spans 218–233; that stretch reads PSGRENEPPEIDPRAE. The ELK domain occupies 236–256; the sequence is ELKFQLLKKYSGYLSSLRQEF. The homeobox; TALE-type DNA-binding region spans 257–320; sequence SKKKKKGKLP…NQRKRHWKPS (64 aa).

The protein belongs to the TALE/KNOX homeobox family. As to expression, expressed in stems, rachis and inflorescence.

The protein resides in the nucleus. Its function is as follows. Probable transcription factor that may be involved in shoot formation during embryogenesis. This Oryza sativa subsp. japonica (Rice) protein is Homeobox protein knotted-1-like 12 (OSH15).